A 62-amino-acid polypeptide reads, in one-letter code: Defensin BmKDfsin3 (62 aa).

Positions 1 to 24 (MKTIVILFVLALVFCTLEMGMVEA) are cleaved as a signal peptide. 3 disulfides stabilise this stretch: C28–C49, C35–C57, and C39–C59.

The protein belongs to the invertebrate defensin family. Type 2 subfamily. Low expression in both venom and non-venom glands (hemolymph).

Its subcellular location is the secreted. In terms of biological role, antibacterial peptide active against Gram-positive bacteria (including S.aureus ATCC25923 (MIC=2.5 uM), M.luteus AB93113 (MIC=2.5 uM), and the antibiotic-resistant S.epidermidis PRSE P1389 (MIC=1.25 uM)), but not against Gram-negative bacteria (including E.coli and P.aeruginosa). Also blocks the currents of Kv1.1/KCNA1 (57% inhibition), Kv1.2/KCNA2 (27.5% inhibition), Kv1.3/KCNA3 (IC(50)=23.4 nM, 84.3% inhibition), KCa3.1/KCNN4/IK (15% inhibition), KCa2.3/KCNN3/SK3 (87.5% inhibition) and Kv11.1/KCNH2/ERG1 (30.4% inhibition) channels (tested at 1 uM). It inhibits potassium channel current by interacting with the pore region. The protein is Defensin BmKDfsin3 of Olivierus martensii (Manchurian scorpion).